The primary structure comprises 150 residues: Siroheme decarboxylase NirD subunit (150 aa).

This sequence belongs to the Ahb/Nir family. In terms of assembly, probably forms a complex composed of NirD, NirL, NirG and NirH. All proteins are required for the total conversion of siroheme to didecarboxysiroheme.

The catalysed reaction is siroheme + 2 H(+) = 12,18-didecarboxysiroheme + 2 CO2. Its pathway is porphyrin-containing compound metabolism. Involved in heme d1 biosynthesis. Catalyzes the decarboxylation of siroheme into didecarboxysiroheme. The protein is Siroheme decarboxylase NirD subunit of Pseudomonas aeruginosa (strain ATCC 15692 / DSM 22644 / CIP 104116 / JCM 14847 / LMG 12228 / 1C / PRS 101 / PAO1).